The primary structure comprises 428 residues: Adenylosuccinate synthetase 1 (428 aa).

GTP is bound by residues 12 to 18 (GDEGKGK) and 40 to 42 (GHT). D13 (proton acceptor) is an active-site residue. Mg(2+) is bound by residues D13 and G40. IMP is bound by residues 13-16 (DEGK), 38-41 (NAGH), T133, R147, N224, T239, and R303. Catalysis depends on H41, which acts as the Proton donor. 299–305 (TTTGRRR) is a substrate binding site. Residues R305, 331 to 333 (KLD), and 413 to 415 (GVG) each bind GTP.

It belongs to the adenylosuccinate synthetase family. Homodimer. It depends on Mg(2+) as a cofactor.

Its subcellular location is the cytoplasm. The catalysed reaction is IMP + L-aspartate + GTP = N(6)-(1,2-dicarboxyethyl)-AMP + GDP + phosphate + 2 H(+). It participates in purine metabolism; AMP biosynthesis via de novo pathway; AMP from IMP: step 1/2. Functionally, plays an important role in the de novo pathway and in the salvage pathway of purine nucleotide biosynthesis. Catalyzes the first committed step in the biosynthesis of AMP from IMP. This chain is Adenylosuccinate synthetase 1, found in Laccaria bicolor (strain S238N-H82 / ATCC MYA-4686) (Bicoloured deceiver).